A 167-amino-acid polypeptide reads, in one-letter code: uncharacterized protein (167 aa).

2 helical membrane-spanning segments follow: residues 96 to 115 (YVPA…FNFY) and 119 to 138 (WGAL…IIAV).

It is found in the cell membrane. This is an uncharacterized protein from Bacillus subtilis (strain 168).